The chain runs to 207 residues: Small ribosomal subunit protein uS4c (207 aa).

The 65-residue stretch at 92-156 (MRLDNILFRL…YQSIITKRIE (65 aa)) folds into the S4 RNA-binding domain.

This sequence belongs to the universal ribosomal protein uS4 family. Part of the 30S ribosomal subunit. Contacts protein S5. The interaction surface between S4 and S5 is involved in control of translational fidelity.

The protein localises to the plastid. It localises to the chloroplast. Functionally, one of the primary rRNA binding proteins, it binds directly to 16S rRNA where it nucleates assembly of the body of the 30S subunit. In terms of biological role, with S5 and S12 plays an important role in translational accuracy. The chain is Small ribosomal subunit protein uS4c (rps4) from Equisetum sylvaticum (Wood horsetail).